Reading from the N-terminus, the 88-residue chain is Large ribosomal subunit protein eL20 (88 aa).

It belongs to the eukaryotic ribosomal protein eL20 family. As to quaternary structure, part of the 50S ribosomal subunit. Binds 23S rRNA.

The sequence is that of Large ribosomal subunit protein eL20 from Aeropyrum pernix (strain ATCC 700893 / DSM 11879 / JCM 9820 / NBRC 100138 / K1).